A 169-amino-acid polypeptide reads, in one-letter code: Procalin (169 aa).

An N-terminal signal peptide occupies residues methionine 1–alanine 18. Cystine bridges form between cysteine 21–cysteine 125, cysteine 54–cysteine 168, and cysteine 83–cysteine 97.

This sequence belongs to the calycin superfamily. Triabin family. Expressed in salivary glands.

The protein localises to the secreted. The polypeptide is Procalin (Hospesneotomae protracta (Western bloodsucking conenose)).